The primary structure comprises 366 residues: Probable quinol oxidase subunit 2 (366 aa).

The signal sequence occupies residues 1–19; that stretch reads MSKFKSLLLLFGTLILLSG. Residue C20 is the site of N-palmitoyl cysteine attachment. A lipid anchor (S-diacylglycerol cysteine) is attached at C20. Transmembrane regions (helical) follow at residues 38–58 and 80–100; these read FLIL…LGMF and AIIE…LAIP. The segment at 330-366 is disordered; sequence EPYNNEFKKDESKNAKEMKKISKDAQDQDNDDHGGGH. Basic and acidic residues predominate over residues 335 to 366; the sequence is EFKKDESKNAKEMKKISKDAQDQDNDDHGGGH.

This sequence belongs to the cytochrome c oxidase subunit 2 family.

The protein localises to the cell membrane. The catalysed reaction is 2 a quinol + O2 = 2 a quinone + 2 H2O. Functionally, catalyzes quinol oxidation with the concomitant reduction of oxygen to water. Subunit II transfers the electrons from a quinol to the binuclear center of the catalytic subunit I. This Staphylococcus aureus (strain bovine RF122 / ET3-1) protein is Probable quinol oxidase subunit 2 (qoxA).